We begin with the raw amino-acid sequence, 250 residues long: Ribonucleotide monophosphatase NagD (250 aa).

Asp9 and Asp11 together coordinate Mg(2+). Residue Asp11 is part of the active site. Substrate-binding positions include Asp11, 42–43, and Lys176; that span reads TN. A Mg(2+)-binding site is contributed by Asp201. 202 to 205 is a substrate binding site; sequence NLRT.

It belongs to the HAD-like hydrolase superfamily. NagD family. As to quaternary structure, monomer. It depends on Mg(2+) as a cofactor. Requires Mn(2+) as cofactor. The cofactor is Co(2+). Zn(2+) is required as a cofactor.

The catalysed reaction is a ribonucleoside 5'-phosphate + H2O = a ribonucleoside + phosphate. Catalyzes the dephosphorylation of an unusually broad range of substrate including deoxyribo- and ribonucleoside tri-, di-, and monophosphates, as well as polyphosphate and glucose-1-P (Glu1P). The chain is Ribonucleotide monophosphatase NagD (nagD) from Escherichia coli O157:H7.